A 466-amino-acid polypeptide reads, in one-letter code: Argininosuccinate lyase (466 aa).

It belongs to the lyase 1 family. Argininosuccinate lyase subfamily.

It is found in the cytoplasm. It catalyses the reaction 2-(N(omega)-L-arginino)succinate = fumarate + L-arginine. It participates in amino-acid biosynthesis; L-arginine biosynthesis; L-arginine from L-ornithine and carbamoyl phosphate: step 3/3. The polypeptide is Argininosuccinate lyase (Bartonella tribocorum (strain CIP 105476 / IBS 506)).